The chain runs to 194 residues: uncharacterized protein (194 aa).

Disordered regions lie at residues 52 to 71 (KGRTTQSAINSENSDKEKYK) and 86 to 194 (AEAL…DGGS). 3 stretches are compositionally biased toward polar residues: residues 53–63 (GRTTQSAINSE), 98–111 (ALTSSKAANRSSTN), and 119–132 (IAHSTSRSRSTSPA). The span at 133–169 (NRHRRKEKERTRSNHRHGSHRRHEPYRTHLSRHHRHS) shows a compositional bias: basic residues. Positions 175–194 (SKRDDRYERRREHSPNDGGS) are enriched in basic and acidic residues.

This is an uncharacterized protein from Schizosaccharomyces pombe (strain 972 / ATCC 24843) (Fission yeast).